The primary structure comprises 204 residues: Cytochrome c biogenesis ATP-binding export protein CcmA (204 aa).

Residues 2–202 form the ABC transporter domain; sequence LEIRNVTCIR…DSNELKKIRL (201 aa). 34 to 41 lines the ATP pocket; that stretch reads GQNGAGKT.

This sequence belongs to the ABC transporter superfamily. CcmA exporter (TC 3.A.1.107) family. In terms of assembly, the complex is composed of two ATP-binding proteins (CcmA) and two transmembrane proteins (CcmB).

The protein localises to the cell inner membrane. It carries out the reaction heme b(in) + ATP + H2O = heme b(out) + ADP + phosphate + H(+). In terms of biological role, part of the ABC transporter complex CcmAB involved in the biogenesis of c-type cytochromes; once thought to export heme, this seems not to be the case, but its exact role is uncertain. Responsible for energy coupling to the transport system. This Aliivibrio fischeri (strain ATCC 700601 / ES114) (Vibrio fischeri) protein is Cytochrome c biogenesis ATP-binding export protein CcmA.